We begin with the raw amino-acid sequence, 202 residues long: U-Kazal-Dg21.2 (202 aa).

The signal sequence occupies residues 1-20; the sequence is MKYFLWSAVTIFAIVNVVGA. Residues 21–87 constitute a propeptide that is removed on maturation; sequence KNSDFDPRCL…SFCQVEEDFD (67 aa). 3 consecutive Kazal-like domains span residues 23–77, 85–140, and 148–202; these read SDFD…KTLM, DFDS…ICRN, and IDPK…KGEC. Intrachain disulfides connect Cys-29–Cys-62, Cys-33–Cys-55, Cys-91–Cys-124, Cys-95–Cys-117, and Cys-103–Cys-138. Residue Asn-140 is glycosylated (N-linked (GlcNAc...) asparagine). Positions 142 to 202 are excised as a propeptide; the sequence is SFKSELIDPK…NWTLIRKGEC (61 aa). 3 cysteine pairs are disulfide-bonded: Cys-154/Cys-187, Cys-158/Cys-180, and Cys-166/Cys-202. A glycan (N-linked (GlcNAc...) asparagine) is linked at Asn-193.

Expressed by the venom gland.

The protein resides in the secreted. Its function is as follows. May act as a serine protease inhibitor, since it possess the kazal serine protease inhibitor signature. The recombinant peptide does not produce toxic effects on insects. In Dolopus genitalis (Giant Australian assassin fly), this protein is U-Kazal-Dg21.2.